The sequence spans 275 residues: Gene 18 protein (275 aa).

It belongs to the herpesviridae UL79 family.

This is Gene 18 protein (18) from Connochaetes taurinus (Blue wildebeest).